Consider the following 839-residue polypeptide: Protein translocase subunit SecA (839 aa).

Residues glutamine 85, glycine 103–threonine 107, and aspartate 493 each bind ATP. Positions glutamine 780–serine 790 are enriched in basic and acidic residues. A disordered region spans residues glutamine 780–serine 839. Residues glutamine 791 to threonine 809 are compositionally biased toward polar residues. Zn(2+) contacts are provided by cysteine 821, cysteine 823, cysteine 832, and histidine 833. The span at lysine 827–serine 839 shows a compositional bias: basic residues.

It belongs to the SecA family. As to quaternary structure, monomer and homodimer. Part of the essential Sec protein translocation apparatus which comprises SecA, SecYEG and auxiliary proteins SecDF. Other proteins may also be involved. Zn(2+) is required as a cofactor.

The protein resides in the cell membrane. Its subcellular location is the cytoplasm. The enzyme catalyses ATP + H2O + cellular proteinSide 1 = ADP + phosphate + cellular proteinSide 2.. In terms of biological role, part of the Sec protein translocase complex. Interacts with the SecYEG preprotein conducting channel. Has a central role in coupling the hydrolysis of ATP to the transfer of proteins into and across the cell membrane, serving as an ATP-driven molecular motor driving the stepwise translocation of polypeptide chains across the membrane. The protein is Protein translocase subunit SecA of Streptococcus pyogenes serotype M1.